A 286-amino-acid chain; its full sequence is Shikimate dehydrogenase (NADP(+)) (286 aa).

Shikimate is bound by residues 20–22 (SLS) and S67. K71 serves as the catalytic Proton acceptor. The shikimate site is built by N92 and D107. NADP(+) contacts are provided by residues 131-135 (GGGGA) and A230. A shikimate-binding site is contributed by Y232. G253 is an NADP(+) binding site.

This sequence belongs to the shikimate dehydrogenase family. Homodimer.

The catalysed reaction is shikimate + NADP(+) = 3-dehydroshikimate + NADPH + H(+). The protein operates within metabolic intermediate biosynthesis; chorismate biosynthesis; chorismate from D-erythrose 4-phosphate and phosphoenolpyruvate: step 4/7. Functionally, involved in the biosynthesis of the chorismate, which leads to the biosynthesis of aromatic amino acids. Catalyzes the reversible NADPH linked reduction of 3-dehydroshikimate (DHSA) to yield shikimate (SA). This Lactococcus lactis subsp. cremoris (strain SK11) protein is Shikimate dehydrogenase (NADP(+)).